The sequence spans 462 residues: CUGBP Elav-like family member 3-B (462 aa).

RRM domains follow at residues 7 to 88 (IKLF…PADS), 95 to 175 (RKLF…FADT), and 377 to 455 (CNIF…LKRP).

This sequence belongs to the CELF/BRUNOL family.

It localises to the nucleus. The protein localises to the cytoplasm. In terms of biological role, RNA-binding protein that may be involved in the regulation of pre-mRNA alternative splicing. The chain is CUGBP Elav-like family member 3-B (tnrc4-b) from Xenopus laevis (African clawed frog).